An 80-amino-acid chain; its full sequence is Protein UL148A (80 aa).

The helical transmembrane segment at 10–30 threads the bilayer; sequence WIPVCVVVVMTSVVLFAGLHV.

The protein resides in the host membrane. Functionally, plays a role in the down-regulation of the host NKG2D ligand MICA by utilizing the lysosomal pathway for its degradation. In turn, MICA reduction diminishes NK-cell killing of HCMV-infected cells. In Human cytomegalovirus (strain Merlin) (HHV-5), this protein is Protein UL148A (UL148A).